A 267-amino-acid polypeptide reads, in one-letter code: tRNA pseudouridine synthase A (267 aa).

D51 (nucleophile) is an active-site residue. Position 109 (Y109) interacts with substrate.

The protein belongs to the tRNA pseudouridine synthase TruA family. In terms of assembly, homodimer.

The enzyme catalyses uridine(38/39/40) in tRNA = pseudouridine(38/39/40) in tRNA. In terms of biological role, formation of pseudouridine at positions 38, 39 and 40 in the anticodon stem and loop of transfer RNAs. The polypeptide is tRNA pseudouridine synthase A (Staphylococcus aureus (strain Mu3 / ATCC 700698)).